Here is a 197-residue protein sequence, read N- to C-terminus: Caspase recruitment domain-containing protein 16 (197 aa).

In terms of domain architecture, CARD spans 1 to 91; it reads MADKVLKEKR…YLAETLGLSA (91 aa).

As to quaternary structure, homooligomer. Interacts with CASP1, CASP4, CARD8 and RIPK2. As to expression, widely expressed. Expressed at higher level in placenta, spleen, lymph node and bone marrow. Weakly or not expressed in thymus.

Caspase inhibitor. Acts as a regulator of procaspase-1/CASP1 activation implicated in the regulation of the proteolytic maturation of pro-interleukin-1 beta (IL1B) and its release during inflammation. Inhibits the release of IL1B in response to LPS in monocytes. Also induces NF-kappa-B activation during the pro-inflammatory cytokine response. Also able to inhibit CASP1-mediated neuronal cell death, TNF-alpha, hypoxia-, UV-, and staurosporine-mediated cell death but not ER stress-mediated cell death. Acts by preventing activation of caspases CASP1 and CASP4, possibly by preventing the interaction between CASP1 and RIPK2. This chain is Caspase recruitment domain-containing protein 16 (CARD16), found in Homo sapiens (Human).